Consider the following 367-residue polypeptide: Germination protease (367 aa).

A propeptide spanning residues 1–15 (MKEPLDLSKYSVRTD) is cleaved from the precursor.

This sequence belongs to the peptidase A25 family. In terms of assembly, homotetramer. In terms of processing, autoproteolytically processed. The inactive tetrameric zymogen termed p46 autoprocesses to a smaller form termed p41, which is active only during spore germination.

It carries out the reaction Endopeptidase action with P4 Glu or Asp, P1 preferably Glu &gt; Asp, P1' hydrophobic and P2' Ala.. Initiates the rapid degradation of small, acid-soluble proteins during spore germination. The protein is Germination protease of Bacillus mycoides (strain KBAB4) (Bacillus weihenstephanensis).